A 321-amino-acid chain; its full sequence is Phosphate acyltransferase (321 aa).

This sequence belongs to the PlsX family. Homodimer. Probably interacts with PlsY.

It localises to the cytoplasm. It carries out the reaction a fatty acyl-[ACP] + phosphate = an acyl phosphate + holo-[ACP]. Its pathway is lipid metabolism; phospholipid metabolism. Its function is as follows. Catalyzes the reversible formation of acyl-phosphate (acyl-PO(4)) from acyl-[acyl-carrier-protein] (acyl-ACP). This enzyme utilizes acyl-ACP as fatty acyl donor, but not acyl-CoA. The polypeptide is Phosphate acyltransferase (Chlamydia trachomatis serovar L2 (strain ATCC VR-902B / DSM 19102 / 434/Bu)).